The following is a 163-amino-acid chain: MMDKLQGWWRSISAREQRLVAVGGSCLLIGFCYWIVWQPIANRIAERERQVLSQQQTLAWLKEKGEEVLAMQGGQGRQIDTSGTLEGVVNRTAFNQKIKIARLQPQGQELQVWIDTVQFDDLLIWLASLADQHGVQVQVIEVARENLAPGLVKVRRLQLSRPQ.

The Cytoplasmic portion of the chain corresponds to M1–L19. A helical membrane pass occupies residues V20 to I40. Residues A41 to Q163 lie on the Periplasmic side of the membrane.

The protein belongs to the GSP M family. Type II secretion system is composed of four main components: the outer membrane complex, the inner membrane complex, the cytoplasmic secretion ATPase and the periplasm-spanning pseudopilus. Forms homodimers. Interacts with ExeL/GspL. Interacts with ExeE/GspE and ExeF/GspF.

Its subcellular location is the cell inner membrane. Its function is as follows. Inner membrane component of the type II secretion system required for the energy-dependent secretion of extracellular factors such as proteases and toxins from the periplasm. Plays a role in the complex assembly and recruits ExeL resulting in a stable complex in the inner membrane. Provides thus a link between the energy-providing ExeE protein in the cytoplasm and the rest of the T2SS machinery. The polypeptide is Type II secretion system protein M (exeM) (Aeromonas hydrophila).